The sequence spans 318 residues: MARLGRLLSVLGLVLCGATGLGLSAPPAPTPKKPIIGILMQKCHNKNMRALGKYYIAASYVKFLESAGARVVPVRLDLKNEEYEKLFKSINGVLFPGGSVNLMRSGYARVAKMFYNLSIKSFGEGDYFPVWGTCLGFEELIYLVSGESLLTLTDTVGIKLPLNFSRGTLQSRMFQNFPADLLLSLAVEPLTAHFHKWSLSVMNFTKNEKLKAFFSILTTNTDGNIDFISTMEGYRYPIYGVQWHPEKAPYEWGQLRGISHAPNAVKAAFYLAEFFVAEARKSNHHFESDVEETKALIYQYRPTYTGNVSSFQQSYIFD.

The first 24 residues, 1–24 (MARLGRLLSVLGLVLCGATGLGLS), serve as a signal peptide directing secretion. The Gamma-glutamyl hydrolase domain occupies 25–318 (APPAPTPKKP…SSFQQSYIFD (294 aa)). Asn116 carries N-linked (GlcNAc...) asparagine glycosylation. Cys134 serves as the catalytic Nucleophile. N-linked (GlcNAc...) asparagine glycosylation is found at Asn163 and Asn203. Catalysis depends on His244, which acts as the Proton donor. N-linked (GlcNAc...) asparagine glycosylation is present at Asn307.

It belongs to the peptidase C26 family. In terms of assembly, homodimer.

It is found in the secreted. The protein localises to the extracellular space. It localises to the lysosome. Its subcellular location is the melanosome. It catalyses the reaction (6S)-5,6,7,8-tetrahydrofolyl-(gamma-L-Glu)(n) + (n-1) H2O = (6S)-5,6,7,8-tetrahydrofolate + (n-1) L-glutamate. In terms of biological role, hydrolyzes the polyglutamate sidechains of pteroylpolyglutamates. Progressively removes gamma-glutamyl residues from pteroylpoly-gamma-glutamate to yield pteroyl-alpha-glutamate (folic acid) and free glutamate. May play an important role in the bioavailability of dietary pteroylpolyglutamates and in the metabolism of pteroylpolyglutamates and antifolates. Exhibits either endo- or exopeptidase activity depending upon the tissue of origin. When secreted, it acts primarily as an endopeptidase. The polypeptide is Gamma-glutamyl hydrolase (GGH) (Bos taurus (Bovine)).